We begin with the raw amino-acid sequence, 731 residues long: Elongation factor 2 (731 aa).

The region spanning 19–260 is the tr-type G domain; the sequence is KHIRNIGIVA…MVVHHLPNPL (242 aa). GTP-binding positions include 28–35, 94–98, and 148–151; these read AHIDHGKT, DTPGH, and NKVD. Diphthamide is present on H597.

Belongs to the TRAFAC class translation factor GTPase superfamily. Classic translation factor GTPase family. EF-G/EF-2 subfamily.

The protein localises to the cytoplasm. Functionally, catalyzes the GTP-dependent ribosomal translocation step during translation elongation. During this step, the ribosome changes from the pre-translocational (PRE) to the post-translocational (POST) state as the newly formed A-site-bound peptidyl-tRNA and P-site-bound deacylated tRNA move to the P and E sites, respectively. Catalyzes the coordinated movement of the two tRNA molecules, the mRNA and conformational changes in the ribosome. The sequence is that of Elongation factor 2 from Methanoregula boonei (strain DSM 21154 / JCM 14090 / 6A8).